The sequence spans 242 residues: Ubiquinone biosynthesis O-methyltransferase (242 aa).

Residues Arg44, Gly64, Asp85, and Met129 each contribute to the S-adenosyl-L-methionine site.

It belongs to the methyltransferase superfamily. UbiG/COQ3 family.

The enzyme catalyses a 3-demethylubiquinol + S-adenosyl-L-methionine = a ubiquinol + S-adenosyl-L-homocysteine + H(+). It catalyses the reaction a 3-(all-trans-polyprenyl)benzene-1,2-diol + S-adenosyl-L-methionine = a 2-methoxy-6-(all-trans-polyprenyl)phenol + S-adenosyl-L-homocysteine + H(+). It functions in the pathway cofactor biosynthesis; ubiquinone biosynthesis. Its function is as follows. O-methyltransferase that catalyzes the 2 O-methylation steps in the ubiquinone biosynthetic pathway. This is Ubiquinone biosynthesis O-methyltransferase from Salmonella typhi.